Consider the following 445-residue polypeptide: MNRFVKGIILLSIAAFFAECLEFVVNMILARELGEHGMGLYMSILPTIFLIIVIASLELPISISKFIAESNPKLHESMLRHAFRMTAIFTAFSTAAASIALPFIPVFDTYHPFIKGIVIGLIPVVAFTSIARGYFMGVQKMGKIAIANVLKKIIQLLCLFLFFQWYSFELDMAVLISLFVLVVSDVVVLVYLYSQFIMARRALSGQQHIHLRGKDVRKRLLAVSIPTTGLRIFHAVVNAIEPFLVKGALLAAGVAGTAAIDQYGMLAGVAVTIGSFPAFIAHSLMVVMIPSISEAYALSQYDIVLKRLKQSIFITLGYGIPAVWVMFQFAGPLTHLFFHSPEAQYYLQLLWPYFLFHLFVMPLQACLIGMGFVKEAFYHNVWSHIVALSMMYVLGSMENLQMLGIILGMNTGMILLTSLHYATICKALKVSVFLTGGTRTPRIEG.

The next 12 membrane-spanning stretches (helical) occupy residues 7–29 (GIIL…NMIL), 39–61 (GLYM…ELPI), 82–104 (AFRM…LPFI), 109–131 (TYHP…TSIA), 144–166 (IAIA…FQWY), 172–194 (MAVL…YLYS), 237–259 (VNAI…GTAA), 269–291 (VAVT…MIPS), 312–334 (IFIT…GPLT), 349–371 (LLWP…IGMG), 376–395 (AFYH…YVLG), and 400–422 (LQML…LHYA).

It is found in the forespore membrane. The polypeptide is Sporulation protein YkvU (ykvU) (Bacillus subtilis (strain 168)).